The following is a 428-amino-acid chain: Glutamate-1-semialdehyde 2,1-aminomutase (428 aa).

Lys265 carries the N6-(pyridoxal phosphate)lysine modification.

It belongs to the class-III pyridoxal-phosphate-dependent aminotransferase family. HemL subfamily. Homodimer. Pyridoxal 5'-phosphate serves as cofactor.

The protein resides in the cytoplasm. It carries out the reaction (S)-4-amino-5-oxopentanoate = 5-aminolevulinate. It participates in porphyrin-containing compound metabolism; protoporphyrin-IX biosynthesis; 5-aminolevulinate from L-glutamyl-tRNA(Glu): step 2/2. The sequence is that of Glutamate-1-semialdehyde 2,1-aminomutase from Vesicomyosocius okutanii subsp. Calyptogena okutanii (strain HA).